Consider the following 1368-residue polypeptide: Protein suppressor 2 of zeste (1368 aa).

Residues 35 to 74 form an RING-type zinc finger; that stretch reads CRLCRGYMIDPTTVDYCYHTYCRSCILKHLLRAVYCPECK. 10 disordered regions span residues 245-321, 448-628, 640-718, 861-903, 935-1001, 1057-1103, 1116-1141, 1161-1193, 1211-1271, and 1298-1322; these read SRIN…FKSL, QPLQ…QQQQ, TLPT…AVPQ, AGGK…KRSC, ALSG…NGTA, SANP…STSN, ISAN…GDDL, AASS…ASVR, STAA…KKPT, and VLSS…RPEP. Residues 449 to 461 show a composition bias toward polar residues; sequence PLQQSASNPDSKY. Residues 462 to 495 show a composition bias toward low complexity; the sequence is SPNASPMSSCSSSTNGSSSSLGTADASTSTSTSS. The span at 496-506 shows a compositional bias: basic residues; it reads SHRKRKKKHSK. Composition is skewed to low complexity over residues 599–628 and 672–689; these read AEPE…QQQQ and PKQQ…VLQQ. Composition is skewed to polar residues over residues 936–953 and 962–977; these read LSGQ…NAYR and LRNT…SKSS. Low complexity-rich tracts occupy residues 1078 to 1099, 1119 to 1138, 1161 to 1183, and 1231 to 1263; these read NNNN…NNNN, NSNG…TTNG, AASS…NANA, and STSN…ATSP.

The protein resides in the nucleus. Regulates expression of the homeotic selector genes by influencing higher-order chromatin structure through interaction with other proteins. This Drosophila melanogaster (Fruit fly) protein is Protein suppressor 2 of zeste (Su(z)2).